A 201-amino-acid polypeptide reads, in one-letter code: Large ribosomal subunit protein uL4 (201 aa).

Residues 44–71 are disordered; sequence RAQKTRAEVTGSGKKPWRQKGTGRARSG.

Belongs to the universal ribosomal protein uL4 family. Part of the 50S ribosomal subunit.

In terms of biological role, one of the primary rRNA binding proteins, this protein initially binds near the 5'-end of the 23S rRNA. It is important during the early stages of 50S assembly. It makes multiple contacts with different domains of the 23S rRNA in the assembled 50S subunit and ribosome. Forms part of the polypeptide exit tunnel. The protein is Large ribosomal subunit protein uL4 of Edwardsiella ictaluri (strain 93-146).